The sequence spans 296 residues: Glycine N-acyltransferase (296 aa).

Residues K16, K127, and K141 each carry the N6-acetyllysine; alternate modification. N6-succinyllysine; alternate occurs at positions 16, 127, and 141. K159 carries the post-translational modification N6-acetyllysine. The residue at position 169 (K169) is an N6-succinyllysine. An N6-acetyllysine; alternate mark is found at K183 and K256. N6-succinyllysine; alternate is present on residues K183 and K256.

The protein belongs to the glycine N-acyltransferase family. Predominantly expressed in liver (at protein level) and kidney. Down-regulated in hepatocellular carcinoma and other liver cancers.

It is found in the mitochondrion. It catalyses the reaction an acyl-CoA + glycine = an N-acylglycine + CoA + H(+). It carries out the reaction benzoyl-CoA + glycine = N-benzoylglycine + CoA + H(+). In terms of biological role, mitochondrial acyltransferase which transfers an acyl group to the N-terminus of glycine and glutamine, although much less efficiently. Can conjugate numerous substrates to form a variety of N-acylglycines, with a preference for benzoyl-CoA over phenylacetyl-CoA as acyl donors. Thereby detoxify xenobiotics, such as benzoic acid or salicylic acid, and endogenous organic acids, such as isovaleric acid. The protein is Glycine N-acyltransferase (GLYAT) of Homo sapiens (Human).